The sequence spans 103 residues: Small ribosomal subunit protein uS14c (103 aa).

The tract at residues 34 to 56 is disordered; that stretch reads KVSPLSLSEKTKMREKLQSLPRN.

This sequence belongs to the universal ribosomal protein uS14 family. In terms of assembly, part of the 30S ribosomal subunit.

Its subcellular location is the plastid. It is found in the chloroplast. Its function is as follows. Binds 16S rRNA, required for the assembly of 30S particles. The polypeptide is Small ribosomal subunit protein uS14c (Brachypodium distachyon (Purple false brome)).